The following is a 699-amino-acid chain: D-(-)-3-hydroxybutyrate oligomer hydrolase (699 aa).

The N-terminal stretch at 1–33 (MTAIRGGSRRAPGLALALLGGVLLGACHGDENA) is a signal peptide. Serine 311 serves as the catalytic Charge relay system.

Belongs to the D-(-)-3-hydroxybutyrate oligomer hydrolase family.

Its subcellular location is the secreted. It carries out the reaction (3R)-hydroxybutanoate dimer + H2O = 2 (R)-3-hydroxybutanoate + H(+). It participates in lipid metabolism; butanoate metabolism. Functionally, participates in the degradation of poly-3-hydroxybutyrate (PHB). It works downstream of poly(3-hydroxybutyrate) depolymerase, hydrolyzing D(-)-3-hydroxybutyrate oligomers of various length (3HB-oligomers) into 3HB-monomers. In Burkholderia pseudomallei (strain 1106a), this protein is D-(-)-3-hydroxybutyrate oligomer hydrolase.